A 201-amino-acid polypeptide reads, in one-letter code: NADH-quinone oxidoreductase subunit B 1 (201 aa).

[4Fe-4S] cluster-binding residues include cysteine 80, cysteine 81, cysteine 145, and cysteine 175.

The protein belongs to the complex I 20 kDa subunit family. As to quaternary structure, NDH-1 is composed of 14 different subunits. Subunits NuoB, C, D, E, F, and G constitute the peripheral sector of the complex. [4Fe-4S] cluster serves as cofactor.

It localises to the cell inner membrane. It catalyses the reaction a quinone + NADH + 5 H(+)(in) = a quinol + NAD(+) + 4 H(+)(out). NDH-1 shuttles electrons from NADH, via FMN and iron-sulfur (Fe-S) centers, to quinones in the respiratory chain. The immediate electron acceptor for the enzyme in this species is believed to be ubiquinone. Couples the redox reaction to proton translocation (for every two electrons transferred, four hydrogen ions are translocated across the cytoplasmic membrane), and thus conserves the redox energy in a proton gradient. The chain is NADH-quinone oxidoreductase subunit B 1 from Rhodopseudomonas palustris (strain BisB18).